We begin with the raw amino-acid sequence, 1244 residues long: Mitotic chromosome and X-chromosome-associated protein mix-1 (1244 aa).

32–39 contacts ATP; the sequence is GYNGSGKS. Residues 247-355 are a coiled coil; the sequence is VKKSAKEIED…AKRKEHEDSK (109 aa). Positions 337–355 are enriched in basic and acidic residues; the sequence is LSKDREVLDAKRKEHEDSK. Residues 337 to 369 are disordered; the sequence is LSKDREVLDAKRKEHEDSKAANSKDIQSQSDDE. Residues 356 to 365 are compositionally biased toward polar residues; it reads AANSKDIQSQ. A coiled-coil region spans residues 415–472; it reads ITAAKKRGERLHNQIKHLEGEKATLSARSKSDIGSADNYQKEVDEINKQLQLLGFNID. The SMC hinge domain maps to 526–654; that stretch reads DVFGYVAHLI…DSLDVAREIA (129 aa). Coiled coils occupy residues 701–946 and 975–1037; these read PQIE…RKEA and YTVS…IATL. Residues 919 to 932 are compositionally biased toward basic and acidic residues; sequence AKTKSKREEKEKEL. A disordered region spans residues 919–943; that stretch reads AKTKSKREEKEKELTSLQQSEASNR. Positions 1216–1232 are enriched in basic and acidic residues; the sequence is DAAAKKGAQKNDKEPPK. The interval 1216-1244 is disordered; sequence DAAAKKGAQKNDKEPPKKKPIVVDDDDFE.

It belongs to the SMC family. SMC2 subfamily. As to quaternary structure, component of the condensin I complex, which contains the mix-1/SMC2 and smc-4/SMC4 heterodimer, and three non SMC subunits that probably regulate the complex: dpy-26, capg-1 and dpy-28. Within the complex, interacts with smc-4, dpy-26, dpy-28 and capg-1. Interaction with smc-4 is required for mitotic chromosome localization. Component of the condensin II complex, which contains the mix-1/SMC2 and smc-4/SMC4 heterodimer, and three non SMC subunits, capg-2, kle-2 and hcp-6 that probably regulate the complex. Within the complex, interacts with smc-4, capg-2, kle-2 and hcp-6. Also a component of the condensin-like dosage compensation complex, which contains the mix-1/SMC2 and dpy-27/SMC4 heterodimer, and three non SMC subunits that probably regulate the complex: dpy-26, capg-1 and dpy-28. Within the complex, interacts with dpy-27, dpy-26, capg-1 and dpy-28. Requires capg-1 for hermaphrodite X chromosome localization. Interacts with smcl-1. As to expression, expressed in embryos and in adult somatic and germline tissues (at protein level).

The protein localises to the nucleus. The protein resides in the chromosome. Functionally, essential protein required for both chromosome condensation and segregation and X-chromosome dosage compensation depending on its binding partners. Central component of the condensin I complex, a complex required for conversion of interphase chromatin into mitotic-like condense chromosomes. The condensin complex introduces positive supercoils into relaxed DNA in the presence of type I topoisomerases. Converts nicked DNA into positive knotted forms in the presence of type II topoisomerases. Central component of the condensin II complex, a complex that seems to play a role in prophase chromosome condensation and organization. Both the condensin complex I and II play a role in meiotic and mitotic chromosome segregation. Plays a role in robust cytokinesis upon the presence of chromatin obstructions. Also a member of the condensin I-like dosage compensation complex that associates specifically with hermaphrodite X chromosomes to reduce their gene transcription during interphase. The polypeptide is Mitotic chromosome and X-chromosome-associated protein mix-1 (mix-1) (Caenorhabditis elegans).